A 363-amino-acid polypeptide reads, in one-letter code: 3-isopropylmalate dehydrogenase (363 aa).

Residue 79 to 92 participates in NAD(+) binding; the sequence is GPKWEHLPPNEQPE. Substrate contacts are provided by Arg100, Arg110, Arg139, and Asp228. 3 residues coordinate Mg(2+): Asp228, Asp252, and Asp256. 286–298 is an NAD(+) binding site; that stretch reads GSAPDIAGKNIAN.

This sequence belongs to the isocitrate and isopropylmalate dehydrogenases family. LeuB type 1 subfamily. Homodimer. Requires Mg(2+) as cofactor. The cofactor is Mn(2+).

The protein localises to the cytoplasm. It carries out the reaction (2R,3S)-3-isopropylmalate + NAD(+) = 4-methyl-2-oxopentanoate + CO2 + NADH. It participates in amino-acid biosynthesis; L-leucine biosynthesis; L-leucine from 3-methyl-2-oxobutanoate: step 3/4. Catalyzes the oxidation of 3-carboxy-2-hydroxy-4-methylpentanoate (3-isopropylmalate) to 3-carboxy-4-methyl-2-oxopentanoate. The product decarboxylates to 4-methyl-2 oxopentanoate. This chain is 3-isopropylmalate dehydrogenase, found in Vibrio cholerae serotype O1 (strain ATCC 39315 / El Tor Inaba N16961).